A 377-amino-acid polypeptide reads, in one-letter code: Glutamate 5-kinase (377 aa).

Lysine 20 contributes to the ATP binding site. Substrate contacts are provided by serine 59, aspartate 146, and asparagine 158. Residues 178–179 (SD) and 220–226 (TGGMSTK) each bind ATP. The 79-residue stretch at 285–363 (RGTLTVDAGA…ADIEAVLGYR (79 aa)) folds into the PUA domain.

The protein belongs to the glutamate 5-kinase family.

It is found in the cytoplasm. It carries out the reaction L-glutamate + ATP = L-glutamyl 5-phosphate + ADP. The protein operates within amino-acid biosynthesis; L-proline biosynthesis; L-glutamate 5-semialdehyde from L-glutamate: step 1/2. Its function is as follows. Catalyzes the transfer of a phosphate group to glutamate to form L-glutamate 5-phosphate. The chain is Glutamate 5-kinase from Myxococcus xanthus (strain DK1622).